A 101-amino-acid polypeptide reads, in one-letter code: uncharacterized protein (101 aa).

It localises to the plastid. Its subcellular location is the chloroplast. This is an uncharacterized protein from Chlamydomonas reinhardtii (Chlamydomonas smithii).